The chain runs to 104 residues: Large ribosomal subunit protein uL24 (104 aa).

Belongs to the universal ribosomal protein uL24 family. Part of the 50S ribosomal subunit.

Functionally, one of two assembly initiator proteins, it binds directly to the 5'-end of the 23S rRNA, where it nucleates assembly of the 50S subunit. In terms of biological role, one of the proteins that surrounds the polypeptide exit tunnel on the outside of the subunit. The polypeptide is Large ribosomal subunit protein uL24 (Azotobacter vinelandii (strain DJ / ATCC BAA-1303)).